The chain runs to 487 residues: Glycogen synthase 2 (487 aa).

ADP-alpha-D-glucose is bound at residue Lys-12.

The protein belongs to the glycosyltransferase 1 family. Bacterial/plant glycogen synthase subfamily.

The enzyme catalyses [(1-&gt;4)-alpha-D-glucosyl](n) + ADP-alpha-D-glucose = [(1-&gt;4)-alpha-D-glucosyl](n+1) + ADP + H(+). It participates in glycan biosynthesis; glycogen biosynthesis. In terms of biological role, synthesizes alpha-1,4-glucan chains using ADP-glucose. The sequence is that of Glycogen synthase 2 from Methylococcus capsulatus (strain ATCC 33009 / NCIMB 11132 / Bath).